Here is a 94-residue protein sequence, read N- to C-terminus: MTTGNNDFYYSNKYEDDEFEYRHVHVTKDVSKLIPKNRLMSETEWRSLGIQQSPGWMHYMIHGPERHVLLFRRPLAATQKTGGNVRSGNAVGVR.

The protein belongs to the CKS family. As to quaternary structure, forms a homohexamer that can probably bind six kinase subunits. Interacts with cdk-1.

It is found in the nucleus. Its function is as follows. Binds to the catalytic subunit of the cyclin dependent kinases and is essential for their biological function. Has a role in the exit from M phase during early mitotic cell division. More specifically, thought to act by degrading B-type cyclins that causes breakdown of nuclear envelope and exit mitosis. The chain is Cyclin-dependent kinases regulatory subunit (cks-1) from Caenorhabditis elegans.